Here is a 507-residue protein sequence, read N- to C-terminus: MEEFKRYLELDRSQQHDFIYPLIFQEYIYALAHDRGLNGSIFFENSGYDNKSSLLIVKRLITHLITQMYQQNHFLFYTNDFNPNKFLRCNTNLYYQMIFEGFVVVVEIPFYLRLLSFLEGKERVKSHNLRSLHSIFPFLEDKFSHLNSLLDILIPHPVHLEILVQTLRYWVKDPSSLHLLRFFLHEYPNWNSLITPKKSSFSFSKRNQRFLFFLYNFHLCEYESIFIFLRNQSSHLCSISSEIFLERISFYKKKDLEEVFTKDLTAILWVFKDPYMHYCRYRGKSILASKDSCLLMNKWKYYLVNFWECYFYIWSQPRRIHINQLSNNSLDFLGYLLSVRLKPSMVRSQMIENSCIIENASKQFDTLVPITPLFRSLSKAKFCNMLGHPISKPVWAASSDSDIIERFGRIYRNLSHYHSGSLKKISLYRIKYILRLSCARTLARKHKSTVRSFLKRLGVGLLEEFFTEEEQVFYLTFPKASSTSGKLYQRRIWYLDIFCINDPANHE.

The protein belongs to the intron maturase 2 family. MatK subfamily.

The protein resides in the plastid. The protein localises to the chloroplast. In terms of biological role, usually encoded in the trnK tRNA gene intron. Probably assists in splicing its own and other chloroplast group II introns. In Lyonia ligustrina (Maleberry), this protein is Maturase K.